The sequence spans 143 residues: Small ribosomal subunit protein uS12 (143 aa).

This sequence belongs to the universal ribosomal protein uS12 family. As to quaternary structure, component of the 40S small ribosomal subunit.

It localises to the cytoplasm. The protein resides in the cytosol. The protein localises to the rough endoplasmic reticulum. The chain is Small ribosomal subunit protein uS12 (rps23) from Gillichthys mirabilis (Long-jawed mudsucker).